Reading from the N-terminus, the 426-residue chain is UDP-N-acetylglucosamine 1-carboxyvinyltransferase (426 aa).

22-23 (KN) is a binding site for phosphoenolpyruvate. R94 lines the UDP-N-acetyl-alpha-D-glucosamine pocket. C118 (proton donor) is an active-site residue. C118 is subject to 2-(S-cysteinyl)pyruvic acid O-phosphothioketal. Residues 123-127 (RPVDL), D310, and I332 each bind UDP-N-acetyl-alpha-D-glucosamine.

It belongs to the EPSP synthase family. MurA subfamily.

Its subcellular location is the cytoplasm. It catalyses the reaction phosphoenolpyruvate + UDP-N-acetyl-alpha-D-glucosamine = UDP-N-acetyl-3-O-(1-carboxyvinyl)-alpha-D-glucosamine + phosphate. Its pathway is cell wall biogenesis; peptidoglycan biosynthesis. Its function is as follows. Cell wall formation. Adds enolpyruvyl to UDP-N-acetylglucosamine. The polypeptide is UDP-N-acetylglucosamine 1-carboxyvinyltransferase (Hyphomonas neptunium (strain ATCC 15444)).